The sequence spans 208 residues: Peptidyl-tRNA hydrolase (208 aa).

Tyrosine 19 contributes to the tRNA binding site. Catalysis depends on histidine 24, which acts as the Proton acceptor. TRNA-binding residues include phenylalanine 71, asparagine 73, and asparagine 119.

It belongs to the PTH family. As to quaternary structure, monomer.

It localises to the cytoplasm. It carries out the reaction an N-acyl-L-alpha-aminoacyl-tRNA + H2O = an N-acyl-L-amino acid + a tRNA + H(+). Hydrolyzes ribosome-free peptidyl-tRNAs (with 1 or more amino acids incorporated), which drop off the ribosome during protein synthesis, or as a result of ribosome stalling. Functionally, catalyzes the release of premature peptidyl moieties from peptidyl-tRNA molecules trapped in stalled 50S ribosomal subunits, and thus maintains levels of free tRNAs and 50S ribosomes. In Synechococcus elongatus (strain ATCC 33912 / PCC 7942 / FACHB-805) (Anacystis nidulans R2), this protein is Peptidyl-tRNA hydrolase.